We begin with the raw amino-acid sequence, 275 residues long: Shikimate dehydrogenase (NADP(+)) (275 aa).

Shikimate contacts are provided by residues 16–18 (SKS) and Thr-63. Catalysis depends on Lys-67, which acts as the Proton acceptor. Asn-88 and Asp-104 together coordinate shikimate. NADP(+)-binding positions include 129 to 133 (GAGGA), 153 to 158 (NRTVAR), and Met-219. Tyr-221 lines the shikimate pocket. Residue Gly-243 participates in NADP(+) binding.

Belongs to the shikimate dehydrogenase family. Homodimer.

It catalyses the reaction shikimate + NADP(+) = 3-dehydroshikimate + NADPH + H(+). The protein operates within metabolic intermediate biosynthesis; chorismate biosynthesis; chorismate from D-erythrose 4-phosphate and phosphoenolpyruvate: step 4/7. Its function is as follows. Involved in the biosynthesis of the chorismate, which leads to the biosynthesis of aromatic amino acids. Catalyzes the reversible NADPH linked reduction of 3-dehydroshikimate (DHSA) to yield shikimate (SA). This is Shikimate dehydrogenase (NADP(+)) from Marinobacter nauticus (strain ATCC 700491 / DSM 11845 / VT8) (Marinobacter aquaeolei).